A 228-amino-acid polypeptide reads, in one-letter code: Eukaryotic translation initiation factor 4E-1 (228 aa).

Residues 1–19 are compositionally biased toward basic and acidic residues; that stretch reads MATAEMEKTTTFDEAEKVK. Residues 1 to 33 are disordered; that stretch reads MATAEMEKTTTFDEAEKVKLNANEADDEVEEGE. Acidic residues predominate over residues 24–33; it reads EADDEVEEGE. EIF4G-binding regions lie at residues 53 to 56 and 63 to 99; these read HPLE and FDNPVAKSKQAAWGSSLRNVYTFSTVEDFWGAYNNIH. MRNA is bound by residues 71-76, K103, and 121-122; these read KQAAWG and WE. Residues C126 and C164 are joined by a disulfide bond. The tract at residues 147-156 is EIF4G-binding; the sequence is YTLLAMIGHQ. Residues 171-176 and 216-220 contribute to the mRNA site; these read RGKGEK and KRLDR.

Belongs to the eukaryotic initiation factor 4E family. EIF4F is a multi-subunit complex, the composition of which varies with external and internal environmental conditions. It is composed of at least EIF4A, EIF4E and EIF4G. EIF4E is also known to interact with other partners. In higher plants two isoforms of EIF4F have been identified, named isoform EIF4F and isoform EIF(iso)4F. Isoform EIF4F has subunits p220 and p26, whereas isoform EIF(iso)4F has subunits p82 and p28. In terms of assembly, (Microbial infection) Interacts with potyvirus viral genome-linked protein (VPg); this interaction is possible in susceptible hosts but is impaired in resistant plants. Thus the VPg of tobacco etch virus (TEV) strain HAT interacts with susceptible alleles pvr2(+), pvr2(3) and pvr2(9) but not with the resistant allele pvr2(2), the VPg of TEV strain CAA10 interacts with susceptible alleles pvr2(+), pvr2(2), pvr2(3) and pvr2(9), the VPg of potato virus Y (PVY) strain LYE84 interacts with tomato eIF4E1 and eIF4E2 as well as with the Capsicum annuum eIF4E1 susceptible allele pvr2(+) but not with resistant alleles pvr2(1), pvr2(2), pvr2(3), pvr2(4), pvr2(5), pvr2(6), pvr2(7), pvr2(8) and pvr2(9) and the VPg of PVY strain SON41 interacts with C.annuum eIF4E1 susceptible alleles pvr2(+), pvr2(1), pvr2(2), pvr2(3) and pvr2(4) but not with resistant alleles pvr2(5), pvr2(6), pvr2(7), pvr2(8) and pvr2(9). In addition, the susceptible allele pvr1(+) interacts strongly with TEV strains HAT and NW VPg while resistance alleles (pvr1, pvr1(1), and pvr1(2)) fail to bind TEV VPg. In terms of processing, according to the redox status, the Cys-126-Cys-164 disulfide bridge may have a role in regulating protein function by affecting its ability to bind capped mRNA.

It localises to the nucleus. Its subcellular location is the cytoplasm. In terms of biological role, component of the protein complex eIF4F, which is involved in the recognition of the mRNA cap, ATP-dependent unwinding of 5'-terminal secondary structure and recruitment of mRNA to the ribosome. Recognizes and binds the 7-methylguanosine-containing mRNA cap during an early step in the initiation of protein synthesis and facilitates ribosome binding by inducing the unwinding of the mRNAs secondary structures. Key component of recessive resistance to potyviruses. Functionally, (Microbial infection) Susceptibility host factor required for viral infection (e.g. potato virus Y (PVY) and tobacco etch virus (TEV)) by recruiting viral RNAs to the host ribosomal complex via an interaction with viral genome-linked protein (VPg). The sequence is that of Eukaryotic translation initiation factor 4E-1 from Capsicum annuum (Capsicum pepper).